Reading from the N-terminus, the 393-residue chain is Branched-chain-amino-acid aminotransferase, mitochondrial (393 aa).

The N-terminal 27 residues, 1-27 (MATAALRQIWIPRFLPVPWFLCGSRRY), are a transit peptide targeting the mitochondrion. Y169 provides a ligand contact to substrate. K230 carries the post-translational modification N6-(pyridoxal phosphate)lysine. K322 carries the N6-acetyllysine modification.

The protein belongs to the class-IV pyridoxal-phosphate-dependent aminotransferase family. As to quaternary structure, homodimer. Pyridoxal 5'-phosphate serves as cofactor.

The protein resides in the mitochondrion. The enzyme catalyses L-leucine + 2-oxoglutarate = 4-methyl-2-oxopentanoate + L-glutamate. It catalyses the reaction L-isoleucine + 2-oxoglutarate = (S)-3-methyl-2-oxopentanoate + L-glutamate. The catalysed reaction is L-valine + 2-oxoglutarate = 3-methyl-2-oxobutanoate + L-glutamate. Catalyzes the first reaction in the catabolism of the essential branched chain amino acids leucine, isoleucine, and valine. May also function as a transporter of branched chain alpha-keto acids. This chain is Branched-chain-amino-acid aminotransferase, mitochondrial (BCAT2), found in Bos taurus (Bovine).